A 226-amino-acid chain; its full sequence is Methylamine utilization ferredoxin-type protein MauM (226 aa).

4Fe-4S ferredoxin-type domains follow at residues 59–87, 95–127, 136–172, and 180–211; these read PEPEFNAACIRCGLCVEACPLDILHLASW, TPYFVGRTDPCRMCPDIPCARACPTGALSPLLT, VAVLVGHETCLNYKGLTCSICVRVCPIIGEAISLKQI, and QIPTVDSSKCTGCGTCEKHCVLSEAAIRLLPR. Residues cysteine 67, cysteine 70, cysteine 73, cysteine 77, cysteine 105, cysteine 108, cysteine 113, cysteine 117, cysteine 145, cysteine 153, cysteine 156, cysteine 160, cysteine 189, cysteine 192, cysteine 195, and cysteine 199 each contribute to the [4Fe-4S] cluster site.

The protein operates within one-carbon metabolism; methylamine degradation. Involved in electron transfer. This Methylophilus methylotrophus (Bacterium W3A1) protein is Methylamine utilization ferredoxin-type protein MauM (mauM).